Here is a 285-residue protein sequence, read N- to C-terminus: Integrin alpha-1 (285 aa).

At 1–285 the chain is on the extracellular side; it reads ENMTFGTTLV…HYSQDWVMLG (285 aa). N-linked (GlcNAc...) asparagine glycans are attached at residues Asn-2, Asn-40, Asn-208, and Asn-232. Residues 66–279 enclose the VWFA domain; that stretch reads IVLDGSNSIY…QAGFSAHYSQ (214 aa).

This sequence belongs to the integrin alpha chain family. In terms of assembly, heterodimer of an alpha and a beta subunit. Alpha-1 associates with beta-1.

The protein localises to the membrane. In terms of biological role, integrin alpha-1/beta-1 is a receptor for laminin and collagen. It recognizes the proline-hydroxylated sequence G-F-P-G-E-R in collagen. Involved in anchorage-dependent, negative regulation of EGF-stimulated cell growth. The sequence is that of Integrin alpha-1 (ITGA1) from Gallus gallus (Chicken).